Here is a 353-residue protein sequence, read N- to C-terminus: Photosystem II D2 protein (353 aa).

Position 2 is an N-acetylthreonine (T2). Residue T2 is modified to Phosphothreonine. The chain crosses the membrane as a helical span at residues 41-61 (CAYFAVGGWFTGTTFVTSWYT). H118 contributes to the chlorophyll a binding site. Residues 125–141 (GFMLRQFELARSVQLRP) form a helical membrane-spanning segment. Pheophytin a contacts are provided by Q130 and N143. Residues 153–166 (VFVSVFLIYPLGQS) traverse the membrane as a helical segment. H198 lines the chlorophyll a pocket. The helical transmembrane segment at 208–228 (AALLCAIHGATVENTLFEDGD) threads the bilayer. 2 residues coordinate a plastoquinone: H215 and F262. H215 lines the Fe cation pocket. H269 contributes to the Fe cation binding site. The helical transmembrane segment at 279 to 295 (GLWMSALGVVGLALNLR) threads the bilayer.

It belongs to the reaction center PufL/M/PsbA/D family. PSII is composed of 1 copy each of membrane proteins PsbA, PsbB, PsbC, PsbD, PsbE, PsbF, PsbH, PsbI, PsbJ, PsbK, PsbL, PsbM, PsbT, PsbX, PsbY, PsbZ, Psb30/Ycf12, at least 3 peripheral proteins of the oxygen-evolving complex and a large number of cofactors. It forms dimeric complexes. The cofactor is The D1/D2 heterodimer binds P680, chlorophylls that are the primary electron donor of PSII, and subsequent electron acceptors. It shares a non-heme iron and each subunit binds pheophytin, quinone, additional chlorophylls, carotenoids and lipids. There is also a Cl(-1) ion associated with D1 and D2, which is required for oxygen evolution. The PSII complex binds additional chlorophylls, carotenoids and specific lipids..

The protein localises to the plastid. It is found in the chloroplast thylakoid membrane. The catalysed reaction is 2 a plastoquinone + 4 hnu + 2 H2O = 2 a plastoquinol + O2. Its function is as follows. Photosystem II (PSII) is a light-driven water:plastoquinone oxidoreductase that uses light energy to abstract electrons from H(2)O, generating O(2) and a proton gradient subsequently used for ATP formation. It consists of a core antenna complex that captures photons, and an electron transfer chain that converts photonic excitation into a charge separation. The D1/D2 (PsbA/PsbD) reaction center heterodimer binds P680, the primary electron donor of PSII as well as several subsequent electron acceptors. D2 is needed for assembly of a stable PSII complex. This is Photosystem II D2 protein from Nicotiana tabacum (Common tobacco).